We begin with the raw amino-acid sequence, 131 residues long: Small ribosomal subunit protein uS11 (131 aa).

The protein belongs to the universal ribosomal protein uS11 family. In terms of assembly, part of the 30S ribosomal subunit. Interacts with proteins S7 and S18. Binds to IF-3.

In terms of biological role, located on the platform of the 30S subunit, it bridges several disparate RNA helices of the 16S rRNA. Forms part of the Shine-Dalgarno cleft in the 70S ribosome. The chain is Small ribosomal subunit protein uS11 from Halorhodospira halophila (strain DSM 244 / SL1) (Ectothiorhodospira halophila (strain DSM 244 / SL1)).